The sequence spans 152 residues: UPF0266 membrane protein YobD (152 aa).

The next 3 helical transmembrane spans lie at 6–26 (LVLI…QFIM), 45–65 (VDSV…VTSH), and 67–87 (AQMT…IFWI).

This sequence belongs to the UPF0266 family.

Its subcellular location is the cell inner membrane. The chain is UPF0266 membrane protein YobD from Salmonella newport (strain SL254).